The sequence spans 721 residues: Protein mu-NS (721 aa).

The interval 1–13 is interaction with sigma-NS; sequence MASFKGFSVNTVP. The RNA-binding stretch occupies residues 1–38; it reads MASFKGFSVNTVPVSKAKRDISSLAATPGIRSQPFTPS. Residues 14–40 are interaction with mu-2; it reads VSKAKRDISSLAATPGIRSQPFTPSVD. Residues 471-721 form an involved in the formation of factory-like inclusions region; it reads SSDMVDGIKL…IDFSVPTDEL (251 aa). Coiled coils occupy residues 523–560 and 628–686; these read LLSQ…SAQA and QMNG…NQRQ.

Belongs to the orthoreovirus mu-NS protein family. In terms of assembly, interacts with mu-2. Interacts with sigma-NS; in viral factories. Interacts with the inner capsid proteins lambda-1 and sigma-2, and outer capsid protein lambda-2; in viral factories. In terms of processing, the N-terminus is blocked.

It is found in the host cytoplasm. Non-structural protein implicated with protein sigma-NS in forming the matrix of viral factories, which are large inclusions in the host cytoplasm where replication intermediates are assembled and viral RNA replication takes place. Together with mu-2, recruits the other core proteins to these factories. The sequence is that of Protein mu-NS (M3) from Mammalia (T1L).